Here is a 70-residue protein sequence, read N- to C-terminus: Waprin-Thr1 (70 aa).

Residues 1–19 (MKARLLLLSVVILVGMVSA) form the signal peptide. The WAP domain maps to 20–70 (ENEKAGSCPDVNQPIPPLGLCRNMCESDSGCPNNEKCCKNGCGFMTCSRPR). 4 disulfides stabilise this stretch: Cys27/Cys57, Cys40/Cys61, Cys44/Cys56, and Cys50/Cys66.

This sequence belongs to the venom waprin family. As to expression, expressed by the venom gland.

The protein localises to the secreted. Damages membranes of susceptible bacteria. Has no hemolytic activity. Not toxic to mice. Does not inhibit the proteinases elastase and cathepsin G. The polypeptide is Waprin-Thr1 (Thrasops jacksonii (Jackson's black tree snake)).